Reading from the N-terminus, the 152-residue chain is Large ribosomal subunit protein bL9 (152 aa).

Belongs to the bacterial ribosomal protein bL9 family.

Binds to the 23S rRNA. This Streptococcus thermophilus (strain CNRZ 1066) protein is Large ribosomal subunit protein bL9.